The sequence spans 356 residues: Guanine nucleotide-binding protein alpha-15 subunit (356 aa).

The N-myristoyl glycine moiety is linked to residue G2. C5 carries S-palmitoyl cysteine lipidation. The G-alpha domain occupies 33 to 356 (GNQKLLLLGT…GRNLRGTGME (324 aa)). The tract at residues 36 to 49 (KLLLLGTGECGKST) is G1 motif. Residues 41 to 48 (GTGECGKS), 177 to 183 (LRIRIPT), 202 to 206 (DVGGQ), 271 to 274 (NKRD), and A328 contribute to the GTP site. Positions 48 and 183 each coordinate Mg(2+). The segment at 175–183 (DMLRIRIPT) is G2 motif. Positions 198–207 (FRIYDVGGQR) are G3 motif. The interval 267-274 (ILFLNKRD) is G4 motif. Positions 326–331 (TCATDT) are G5 motif.

Belongs to the G-alpha family. G proteins are composed of 3 units; alpha, beta and gamma. The alpha chain contains the guanine nucleotide binding site.

In terms of biological role, guanine nucleotide-binding proteins (G proteins) are involved as modulators or transducers in various transmembrane signaling systems. This chain is Guanine nucleotide-binding protein alpha-15 subunit (gpa-15), found in Caenorhabditis elegans.